Consider the following 485-residue polypeptide: Ras-like GTPase YcjX (485 aa).

The Walker A motif motif lies at Gly33 to Thr40. Positions 35, 36, 38, 39, 40, 41, 110, 113, 114, 115, 355, 357, and 358 each coordinate GTP. GDP contacts are provided by Gly36, Gly38, Lys39, Thr40, Ala41, Trp110, Ser113, and Thr114. GDP-binding residues include Lys355, Asp357, His358, Ser395, Ala396, and Ile397. GTP is bound at residue Ile397.

Monomer in solution. Mg(2+) is required as a cofactor.

It carries out the reaction GTP + H2O = GDP + phosphate + H(+). Its activity is regulated as follows. Alternates between an inactive form bound to GDP and an active form bound to GTP. Likely activated by a guanine nucleotide-exchange factor (GEF). In terms of biological role, binds GTP and GDP. Has intrinsic GTPase activity. Does not hydrolyze ATP. May act as a transducer of stress responses. This chain is Ras-like GTPase YcjX, found in Shewanella oneidensis (strain ATCC 700550 / JCM 31522 / CIP 106686 / LMG 19005 / NCIMB 14063 / MR-1).